The following is a 242-amino-acid chain: Triosephosphate isomerase (242 aa).

Residue 9–11 (NWK) coordinates substrate. Catalysis depends on His90, which acts as the Electrophile. Glu162 acts as the Proton acceptor in catalysis. Substrate is bound by residues Gly168, Ser205, and 226 to 227 (GG).

Belongs to the triosephosphate isomerase family. As to quaternary structure, homodimer.

The protein resides in the cytoplasm. It catalyses the reaction D-glyceraldehyde 3-phosphate = dihydroxyacetone phosphate. It participates in carbohydrate biosynthesis; gluconeogenesis. The protein operates within carbohydrate degradation; glycolysis; D-glyceraldehyde 3-phosphate from glycerone phosphate: step 1/1. Involved in the gluconeogenesis. Catalyzes stereospecifically the conversion of dihydroxyacetone phosphate (DHAP) to D-glyceraldehyde-3-phosphate (G3P). The polypeptide is Triosephosphate isomerase (Azoarcus sp. (strain BH72)).